A 198-amino-acid chain; its full sequence is uncharacterized protein (198 aa).

The HTH tetR-type domain occupies 11–71 (EGTHKAILSA…DSFLSTATDR (61 aa)). Positions 34 to 53 (TVDKIAERAKVSKATIYKWW) form a DNA-binding region, H-T-H motif.

This is an uncharacterized protein from Bacillus subtilis (strain 168).